A 61-amino-acid chain; its full sequence is Small ribosomal subunit protein uS14 (61 aa).

Positions 24, 27, 40, and 43 each coordinate Zn(2+).

It belongs to the universal ribosomal protein uS14 family. Zinc-binding uS14 subfamily. As to quaternary structure, part of the 30S ribosomal subunit. Contacts proteins S3 and S10. It depends on Zn(2+) as a cofactor.

Functionally, binds 16S rRNA, required for the assembly of 30S particles and may also be responsible for determining the conformation of the 16S rRNA at the A site. The polypeptide is Small ribosomal subunit protein uS14 (Thermosipho africanus (strain TCF52B)).